A 397-amino-acid chain; its full sequence is Ribosomal RNA large subunit methyltransferase I (397 aa).

One can recognise a PUA domain in the interval 2-78; sequence TPAIYLVKGR…EQEPIDRDFF (77 aa).

It belongs to the methyltransferase superfamily. RlmI family.

It localises to the cytoplasm. It carries out the reaction cytidine(1962) in 23S rRNA + S-adenosyl-L-methionine = 5-methylcytidine(1962) in 23S rRNA + S-adenosyl-L-homocysteine + H(+). Its function is as follows. Specifically methylates the cytosine at position 1962 (m5C1962) of 23S rRNA. This Vibrio cholerae serotype O1 (strain ATCC 39541 / Classical Ogawa 395 / O395) protein is Ribosomal RNA large subunit methyltransferase I.